The chain runs to 270 residues: Phosphatidylglycerol--prolipoprotein diacylglyceryl transferase (270 aa).

4 consecutive transmembrane segments (helical) span residues 19–39 (FPVY…LWLA), 56–76 (LVLI…VIFE), 92–112 (QGGL…VLFA), and 116–136 (GLSF…GQAI). Arginine 138 serves as a coordination point for a 1,2-diacyl-sn-glycero-3-phospho-(1'-sn-glycerol). 3 helical membrane passes run 178–198 (HPTF…LLAL), 206–226 (GELF…VEGL), and 236–256 (LRIA…FIIV).

The protein belongs to the Lgt family.

It localises to the cell membrane. The catalysed reaction is L-cysteinyl-[prolipoprotein] + a 1,2-diacyl-sn-glycero-3-phospho-(1'-sn-glycerol) = an S-1,2-diacyl-sn-glyceryl-L-cysteinyl-[prolipoprotein] + sn-glycerol 1-phosphate + H(+). It participates in protein modification; lipoprotein biosynthesis (diacylglyceryl transfer). Its function is as follows. Catalyzes the transfer of the diacylglyceryl group from phosphatidylglycerol to the sulfhydryl group of the N-terminal cysteine of a prolipoprotein, the first step in the formation of mature lipoproteins. The protein is Phosphatidylglycerol--prolipoprotein diacylglyceryl transferase of Bacillus cereus (strain ATCC 14579 / DSM 31 / CCUG 7414 / JCM 2152 / NBRC 15305 / NCIMB 9373 / NCTC 2599 / NRRL B-3711).